Reading from the N-terminus, the 103-residue chain is Co-chaperonin GroES (103 aa).

Residues 31–67 (GGILLPDTAKEKPQVGEVAQVGPGKRNEDGSRQSPEV) are disordered.

This sequence belongs to the GroES chaperonin family. As to quaternary structure, heptamer of 7 subunits arranged in a ring. Interacts with the chaperonin GroEL.

Its subcellular location is the cytoplasm. In terms of biological role, together with the chaperonin GroEL, plays an essential role in assisting protein folding. The GroEL-GroES system forms a nano-cage that allows encapsulation of the non-native substrate proteins and provides a physical environment optimized to promote and accelerate protein folding. GroES binds to the apical surface of the GroEL ring, thereby capping the opening of the GroEL channel. The polypeptide is Co-chaperonin GroES (Prochlorococcus marinus (strain NATL2A)).